Reading from the N-terminus, the 523-residue chain is Putative oxidoreductase TDA3 (523 aa).

Residues Asn-157–Ala-172 show a composition bias toward low complexity. Residues Asn-157 to Ser-189 form a disordered region. 3 positions are modified to phosphoserine: Ser-189, Ser-204, and Ser-306.

The protein belongs to the TDA3 family. In terms of assembly, interacts with BTN2.

Its subcellular location is the cytoplasm. It localises to the late endosome. In terms of biological role, putative oxidoreductase that negatively regulates the retrieval of cargo from late endosomes to the Golgi. Regulates YIF1 and KEX2 localization. Required for fast DNA replication. The polypeptide is Putative oxidoreductase TDA3 (TDA3) (Saccharomyces cerevisiae (strain ATCC 204508 / S288c) (Baker's yeast)).